We begin with the raw amino-acid sequence, 275 residues long: Fructose-2,6-bisphosphatase TIGAR (275 aa).

H11 acts as the Tele-phosphohistidine intermediate in catalysis. E89 (proton donor/acceptor) is an active-site residue.

The protein belongs to the phosphoglycerate mutase family.

The protein localises to the cytoplasm. It is found in the nucleus. The protein resides in the mitochondrion. It catalyses the reaction beta-D-fructose 2,6-bisphosphate + H2O = beta-D-fructose 6-phosphate + phosphate. Its function is as follows. Fructose-bisphosphatase hydrolyzing fructose-2,6-bisphosphate as well as fructose-1,6-bisphosphate. Acts as a negative regulator of glycolysis by lowering intracellular levels of fructose-2,6-bisphosphate in a p53/TP53-dependent manner, resulting in the pentose phosphate pathway (PPP) activation and NADPH production. Contributes to the generation of reduced glutathione to cause a decrease in intracellular reactive oxygen species (ROS) content, correlating with its ability to protect cells from oxidative or metabolic stress-induced cell death. May play a role in mitophagy inhibition. This is Fructose-2,6-bisphosphatase TIGAR from Xenopus laevis (African clawed frog).